The following is a 430-amino-acid chain: Pre-B-cell leukemia transcription factor 1 (430 aa).

The segment at 1 to 40 (MDEQPRLMHSHAGVGMAGHPGLSQHLQDGAGGTEGEGGRK) is disordered. The PBC domain occupies 38–232 (GRKQDIGDIL…VMILRSRFLD (195 aa)). Residues 45 to 124 (DILQQIMTIT…EGVAGPEKGG (80 aa)) are PBC-A. Positions 127–232 (AAAAAAAAAS…VMILRSRFLD (106 aa)) are PBC-B. Positions 233 to 295 (ARRKRRNFNK…NKRIRYKKNI (63 aa)) form a DNA-binding region, homeobox; TALE-type. Disordered regions lie at residues 317-338 (SAHG…SSSF) and 395-430 (SPQG…DTSN). Over residues 323–338 (ANSPSTPNSAGSSSSF) the composition is skewed to low complexity. Polar residues predominate over residues 407–418 (DATTPSSVTSPT).

It belongs to the TALE/PBX homeobox family. Forms a heterodimer with MEIS1 which binds DNA. The PBX1-MEIS1 heterodimer binds a cAMP-responsive sequence in CYP17. It also binds a consensus region in the SOX3 promoter. PBX1 forms heterotrimers with MEIS1 and a number of HOX proteins including HOXA9, HOXD4, HOXD9 and HOXD10. Forms heterodimers with HOXA1, HOXA5, HOXB7 and HOXB8 which bind the 5'-TGATTGAT-3' consensus sequence. Also forms heterodimers with HOXA5, HOXB7, HOXB8, HOXC8 and HOXD4 which bind the 5'-ATCAATCAA-3' consensus sequence. Interacts with PBXIP1. Interacts with TLX1. Interacts with FOXC1. Interacts with MN1. As to quaternary structure, interacts with MEIS2 isoform 4, SP1, SP3 and KLF4. In terms of assembly, part of a PDX1:PBX1b:MEIS2B complex; PBX1b recruits MEIS2B to the complex. As to expression, expressed in the kidney. Expressed in the endothelial cells of the glomeruli and interstitium (at protein level). Expressed in all tissues except in cells of the B and T lineage. Expressed strongly in kidney and brain.

It localises to the nucleus. Transcription factor which binds the DNA sequence 5'-TGATTGAT-3' as part of a heterodimer with HOX proteins such as HOXA1, HOXA5, HOXB7 and HOXB8. Binds to the DNA sequence 5'-TGATTGAC-3' in complex with a nuclear factor which is not a class I HOX protein. Has also been shown to bind the DNA sequence 5'-ATCAATCAA-3' cooperatively with HOXA5, HOXB7, HOXB8, HOXC8 and HOXD4. Acts as a transcriptional activator of PF4 in complex with MEIS1. Also activates transcription of SOX3 in complex with MEIS1 by binding to the 5'-TGATTGAC-3' consensus sequence. In natural killer cells, binds to the NFIL3 promoter and acts as a transcriptional activator of NFIL3, promoting natural killer cell development. Plays a role in the cAMP-dependent regulation of CYP17A1 gene expression via its cAMP-regulatory sequence (CRS1). Probably in complex with MEIS2, involved in transcriptional regulation by KLF4. Acts as a transcriptional activator of NKX2-5 and a transcriptional repressor of CDKN2B. Together with NKX2-5, required for spleen development through a mechanism that involves CDKN2B repression. In terms of biological role, as part of a PDX1:PBX1b:MEIS2B complex in pancreatic acinar cells, is involved in the transcriptional activation of the ELA1 enhancer; the complex binds to the enhancer B element and cooperates with the transcription factor 1 complex (PTF1) bound to the enhancer A element. This chain is Pre-B-cell leukemia transcription factor 1 (PBX1), found in Homo sapiens (Human).